The sequence spans 329 residues: Acetyl-coenzyme A carboxylase carboxyl transferase subunit alpha (329 aa).

In terms of domain architecture, CoA carboxyltransferase C-terminal spans 40-294 (QLETLAARRR…KESLIRNLRE (255 aa)).

It belongs to the AccA family. As to quaternary structure, acetyl-CoA carboxylase is a heterohexamer composed of biotin carboxyl carrier protein (AccB), biotin carboxylase (AccC) and two subunits each of ACCase subunit alpha (AccA) and ACCase subunit beta (AccD).

The protein localises to the cytoplasm. The catalysed reaction is N(6)-carboxybiotinyl-L-lysyl-[protein] + acetyl-CoA = N(6)-biotinyl-L-lysyl-[protein] + malonyl-CoA. The protein operates within lipid metabolism; malonyl-CoA biosynthesis; malonyl-CoA from acetyl-CoA: step 1/1. Component of the acetyl coenzyme A carboxylase (ACC) complex. First, biotin carboxylase catalyzes the carboxylation of biotin on its carrier protein (BCCP) and then the CO(2) group is transferred by the carboxyltransferase to acetyl-CoA to form malonyl-CoA. The protein is Acetyl-coenzyme A carboxylase carboxyl transferase subunit alpha of Prochlorococcus marinus (strain MIT 9211).